Here is a 94-residue protein sequence, read N- to C-terminus: Aspartyl/glutamyl-tRNA(Asn/Gln) amidotransferase subunit C (94 aa).

It belongs to the GatC family. Heterotrimer of A, B and C subunits.

It catalyses the reaction L-glutamyl-tRNA(Gln) + L-glutamine + ATP + H2O = L-glutaminyl-tRNA(Gln) + L-glutamate + ADP + phosphate + H(+). The catalysed reaction is L-aspartyl-tRNA(Asn) + L-glutamine + ATP + H2O = L-asparaginyl-tRNA(Asn) + L-glutamate + ADP + phosphate + 2 H(+). Allows the formation of correctly charged Asn-tRNA(Asn) or Gln-tRNA(Gln) through the transamidation of misacylated Asp-tRNA(Asn) or Glu-tRNA(Gln) in organisms which lack either or both of asparaginyl-tRNA or glutaminyl-tRNA synthetases. The reaction takes place in the presence of glutamine and ATP through an activated phospho-Asp-tRNA(Asn) or phospho-Glu-tRNA(Gln). In Syntrophomonas wolfei subsp. wolfei (strain DSM 2245B / Goettingen), this protein is Aspartyl/glutamyl-tRNA(Asn/Gln) amidotransferase subunit C.